The chain runs to 510 residues: UDP-N-acetylmuramate--L-alanine ligase (510 aa).

Residues Met-1–Asn-25 form a disordered region. Gly-140–Thr-146 contributes to the ATP binding site.

This sequence belongs to the MurCDEF family.

It is found in the cytoplasm. It catalyses the reaction UDP-N-acetyl-alpha-D-muramate + L-alanine + ATP = UDP-N-acetyl-alpha-D-muramoyl-L-alanine + ADP + phosphate + H(+). It functions in the pathway cell wall biogenesis; peptidoglycan biosynthesis. In terms of biological role, cell wall formation. The protein is UDP-N-acetylmuramate--L-alanine ligase of Synechococcus sp. (strain JA-3-3Ab) (Cyanobacteria bacterium Yellowstone A-Prime).